A 183-amino-acid polypeptide reads, in one-letter code: MSAITPYDWAIIAFVIGVTFLCVFMLTVPLLLGGKSWGRAKQEQFESGVVSAGGARIRLSAKFYLVAIFFVVFDLEALYLYAWSTSVREVGWLGYTTVVIFVVDLLIALVYAFSVGALSWAPADRRKLAGEKIKVGSPTMNIAEITRFNSIEELVTDPTGQIPAQSSGRVKSKTTPALSSEKE.

A run of 3 helical transmembrane segments spans residues 11–31 (IIAF…VPLL), 63–83 (FYLV…LYAW), and 98–118 (VVIF…VGAL). The tract at residues 159–183 (TGQIPAQSSGRVKSKTTPALSSEKE) is disordered.

This sequence belongs to the complex I subunit 3 family. In terms of assembly, NDH-1 is composed of 14 different subunits. Subunits NuoA, H, J, K, L, M, N constitute the membrane sector of the complex.

The protein localises to the cell inner membrane. The catalysed reaction is a quinone + NADH + 5 H(+)(in) = a quinol + NAD(+) + 4 H(+)(out). NDH-1 shuttles electrons from NADH, via FMN and iron-sulfur (Fe-S) centers, to quinones in the respiratory chain. The immediate electron acceptor for the enzyme in this species is believed to be ubiquinone. Couples the redox reaction to proton translocation (for every two electrons transferred, four hydrogen ions are translocated across the cytoplasmic membrane), and thus conserves the redox energy in a proton gradient. The chain is NADH-quinone oxidoreductase subunit A from Acinetobacter baumannii (strain ACICU).